The following is a 633-amino-acid chain: Threonine--tRNA ligase (633 aa).

In terms of domain architecture, TGS spans 1-59 (MIKVTFLAEQKVKEYSGRVTGFDILQPDALREAIAFKVNGELYDLSREIESDTEIEVIQ). Residues 240–532 (DHRKIAKDMD…LIENYAGKFP (293 aa)) are catalytic. The Zn(2+) site is built by Cys-332, His-383, and His-509.

The protein belongs to the class-II aminoacyl-tRNA synthetase family. Homodimer. Requires Zn(2+) as cofactor.

It is found in the cytoplasm. The catalysed reaction is tRNA(Thr) + L-threonine + ATP = L-threonyl-tRNA(Thr) + AMP + diphosphate + H(+). In terms of biological role, catalyzes the attachment of threonine to tRNA(Thr) in a two-step reaction: L-threonine is first activated by ATP to form Thr-AMP and then transferred to the acceptor end of tRNA(Thr). Also edits incorrectly charged L-seryl-tRNA(Thr). This is Threonine--tRNA ligase from Wolbachia pipientis subsp. Culex pipiens (strain wPip).